Consider the following 809-residue polypeptide: Lon protease (809 aa).

The 197-residue stretch at 20–216 (LPLLALRDVV…ELMNYLMNQS (197 aa)) folds into the Lon N-terminal domain. Residue 369 to 376 (GPPGVGKT) participates in ATP binding. The Lon proteolytic domain maps to 606-787 (EAQVGRVNGL…DEILPLALTS (182 aa)). Active-site residues include Ser693 and Lys736.

It belongs to the peptidase S16 family. Homohexamer. Organized in a ring with a central cavity.

It localises to the cytoplasm. It catalyses the reaction Hydrolysis of proteins in presence of ATP.. In terms of biological role, ATP-dependent serine protease that mediates the selective degradation of mutant and abnormal proteins as well as certain short-lived regulatory proteins. Required for cellular homeostasis and for survival from DNA damage and developmental changes induced by stress. Degrades polypeptides processively to yield small peptide fragments that are 5 to 10 amino acids long. Binds to DNA in a double-stranded, site-specific manner. This Acinetobacter baumannii (strain AB307-0294) protein is Lon protease.